Consider the following 465-residue polypeptide: Ribosomal oxygenase 2 (465 aa).

The JmjC domain maps to glutamine 139 to serine 271. Fe cation is bound by residues histidine 179, aspartate 181, and histidine 240. Serine 309 is modified (phosphoserine).

It belongs to the ROX family. MINA53 subfamily. The cofactor is Fe(2+). In terms of tissue distribution, predominantly expressed in testis. Expressed at high levels in spleen, thymus, and colon, but barely detectable in brain, skeletal muscle, and seminal vesicle (at protein level).

It is found in the nucleus. Its subcellular location is the nucleolus. The catalysed reaction is L-histidyl-[ribosomal protein uL15] + 2-oxoglutarate + O2 = (3S)-3-hydroxy-L-histidyl-[ribosomal protein uL15] + succinate + CO2. The enzyme catalyses L-histidyl-[protein] + 2-oxoglutarate + O2 = (3S)-3-hydroxy-L-histidyl-[protein] + succinate + CO2. In terms of biological role, oxygenase that can act as both a histone lysine demethylase and a ribosomal histidine hydroxylase. Is involved in the demethylation of trimethylated 'Lys-9' on histone H3 (H3K9me3), leading to an increase in ribosomal RNA expression. Also catalyzes the hydroxylation of 60S ribosomal protein L27a on 'His-39'. May play an important role in cell growth and survival. May be involved in ribosome biogenesis, most likely during the assembly process of pre-ribosomal particles. This chain is Ribosomal oxygenase 2, found in Mus musculus (Mouse).